A 409-amino-acid polypeptide reads, in one-letter code: Lissencephaly-1 homolog (409 aa).

The LisH domain occupies 7–39; sequence QKEELNKAIADYLHQCGFEDTLNAFKQDANMPG. The stretch at 54 to 80 forms a coiled coil; it reads TSVIRLQKKVMDLETRLSEAEKEVHHG. A disordered region spans residues 72–95; it reads EAEKEVHHGGGPKKTRSPEDWIPR. WD repeat units lie at residues 104-145, 146-187, 188-229, 231-269, 272-332, 335-374, and 377-409; these read GHRS…RTLK, GHTD…RTLH, GHDH…KTFQ, HGEWVRRVRPNADGSLIASCSNDQTIRVWVVASRECKCD, DHDH…CLVT, GHDNWVRAVMFHPGGKFIVSCSDDKTLRIWDYKNKRCAKT, and AHEHFVTTLDFHKSAPFVATGSVDLTLKVWECR.

The protein belongs to the WD repeat LIS1/nudF family.

It localises to the cytoplasm. The protein localises to the cytoskeleton. Its subcellular location is the microtubule organizing center. It is found in the centrosome. Its function is as follows. Positively regulates the activity of the minus-end directed microtubule motor protein dynein. May enhance dynein-mediated microtubule sliding by targeting dynein to the microtubule plus end. Required for several dynein- and microtubule-dependent processes. This Nematostella vectensis (Starlet sea anemone) protein is Lissencephaly-1 homolog.